An 852-amino-acid chain; its full sequence is Mannosyl-oligosaccharide glucosidase GCS1 (852 aa).

The tract at residues 1-31 (MTGASRRSARGRIKSSSLSPGSDEGSAYPPS) is disordered. Residues 1–51 (MTGASRRSARGRIKSSSLSPGSDEGSAYPPSIRRGKGKELVSIGAFKTNLK) lie on the Cytoplasmic side of the membrane. The Endoplasmic reticulum targeting signature appears at 6–12 (RRSARGR). Over residues 15–26 (SSSLSPGSDEGS) the composition is skewed to low complexity. Residues 52–72 (ILVGLIILGIIVIYFVINRLV) traverse the membrane as a helical; Signal-anchor for type II membrane protein segment. Residues 73–852 (RHGLLFDESQ…LIMSEDYPIF (780 aa)) are Lumenal-facing. The segment at 91 to 150 (PAPKVMDLSMFQGEHKESLYWGTYRPHVYFGVRARTPLSLVAGLMWLGVKDEMYVMRHFC) is required for endoplasmic reticulum targeting. N-linked (GlcNAc...) asparagine glycosylation is found at Asn282, Asn552, and Asn570. Over residues 574-583 (QELNPKTLSS) the composition is skewed to polar residues. Residues 574 to 593 (QELNPKTLSSGLDDYPRASH) form a disordered region. The active-site Proton donor is the Asp586. Residues Asn633, Asn662, and Asn730 are each glycosylated (N-linked (GlcNAc...) asparagine). Catalysis depends on Glu819, which acts as the Proton acceptor.

The protein belongs to the glycosyl hydrolase 63 family. In terms of tissue distribution, constitutively expressed in roots, stems, leaves, flowers and siliques.

The protein resides in the endoplasmic reticulum membrane. The catalysed reaction is N(4)-(alpha-D-Glc-(1-&gt;2)-alpha-D-Glc-(1-&gt;3)-alpha-D-Glc-(1-&gt;3)-alpha-D-Man-(1-&gt;2)-alpha-D-Man-(1-&gt;2)-alpha-D-Man-(1-&gt;3)-[alpha-D-Man-(1-&gt;2)-alpha-D-Man-(1-&gt;3)-[alpha-D-Man-(1-&gt;2)-alpha-D-Man-(1-&gt;6)]-alpha-D-Man-(1-&gt;6)]-beta-D-Man-(1-&gt;4)-beta-D-GlcNAc-(1-&gt;4)-beta-D-GlcNAc)-L-asparaginyl-[protein] + H2O = N(4)-(alpha-D-Glc-(1-&gt;3)-alpha-D-Glc-(1-&gt;3)-alpha-D-Man-(1-&gt;2)-alpha-D-Man-(1-&gt;2)-alpha-D-Man-(1-&gt;3)-[alpha-D-Man-(1-&gt;2)-alpha-D-Man-(1-&gt;3)-[alpha-D-Man-(1-&gt;2)-alpha-D-Man-(1-&gt;6)]-alpha-D-Man-(1-&gt;6)]-beta-D-Man-(1-&gt;4)-beta-D-GlcNAc-(1-&gt;4)-beta-D-GlcNAc)-L-asparaginyl-[protein] + beta-D-glucose. Its pathway is glycan metabolism; N-glycan degradation. Functionally, cleaves the distal alpha 1,2-linked glucose residue from the Glc(3)Man(9)GlcNAc(2) oligosaccharide precursor. Required for the accumulation of seed storage proteins, the formation of protein bodies, cell differentiation, cellulose biosynthesis and organization (in cell walls), cell shape determination and organization (e.g. epidermal cells), and embryo development. Involved in root development. The protein is Mannosyl-oligosaccharide glucosidase GCS1 (GCS1) of Arabidopsis thaliana (Mouse-ear cress).